The sequence spans 147 residues: Myoglobin (147 aa).

The Globin domain occupies 2 to 141; sequence HDAELVLKCW…VIGDIDTYYK (140 aa). Position 60 (H60) interacts with nitrite. H60 lines the O2 pocket. Residue H89 coordinates heme b.

This sequence belongs to the globin family. As to quaternary structure, monomeric.

Its subcellular location is the cytoplasm. It is found in the sarcoplasm. The catalysed reaction is Fe(III)-heme b-[protein] + nitric oxide + H2O = Fe(II)-heme b-[protein] + nitrite + 2 H(+). It carries out the reaction H2O2 + AH2 = A + 2 H2O. Its function is as follows. Monomeric heme protein which primary function is to store oxygen and facilitate its diffusion within muscle tissues. Reversibly binds oxygen through a pentacoordinated heme iron and enables its timely and efficient release as needed during periods of heightened demand. Depending on the oxidative conditions of tissues and cells, and in addition to its ability to bind oxygen, it also has a nitrite reductase activity whereby it regulates the production of bioactive nitric oxide. Under stress conditions, like hypoxia and anoxia, it also protects cells against reactive oxygen species thanks to its pseudoperoxidase activity. The chain is Myoglobin (mb) from Cyprinus carpio (Common carp).